Here is a 475-residue protein sequence, read N- to C-terminus: Ribulose bisphosphate carboxylase large chain (475 aa).

Residues 1-2 (MS) constitute a propeptide that is removed on maturation. The residue at position 3 (Pro-3) is an N-acetylproline. An N6,N6,N6-trimethyllysine modification is found at Lys-14. Residues Asn-123 and Thr-173 each coordinate substrate. Lys-175 serves as the catalytic Proton acceptor. Position 177 (Lys-177) interacts with substrate. Positions 201, 203, and 204 each coordinate Mg(2+). At Lys-201 the chain carries N6-carboxylysine. The active-site Proton acceptor is His-294. The substrate site is built by Arg-295, His-327, and Ser-379.

The protein belongs to the RuBisCO large chain family. Type I subfamily. Heterohexadecamer of 8 large chains and 8 small chains. Mg(2+) is required as a cofactor.

Its subcellular location is the plastid. It is found in the chloroplast. It carries out the reaction 2 (2R)-3-phosphoglycerate + 2 H(+) = D-ribulose 1,5-bisphosphate + CO2 + H2O. It catalyses the reaction D-ribulose 1,5-bisphosphate + O2 = 2-phosphoglycolate + (2R)-3-phosphoglycerate + 2 H(+). Functionally, ruBisCO catalyzes two reactions: the carboxylation of D-ribulose 1,5-bisphosphate, the primary event in carbon dioxide fixation, as well as the oxidative fragmentation of the pentose substrate in the photorespiration process. Both reactions occur simultaneously and in competition at the same active site. The protein is Ribulose bisphosphate carboxylase large chain of Huperzia lucidula (Shining clubmoss).